Consider the following 100-residue polypeptide: Large ribosomal subunit protein eL30 (100 aa).

It belongs to the eukaryotic ribosomal protein eL30 family.

The polypeptide is Large ribosomal subunit protein eL30 (Thermococcus sibiricus (strain DSM 12597 / MM 739)).